The following is a 278-amino-acid chain: 3-methyl-2-oxobutanoate hydroxymethyltransferase (278 aa).

2 residues coordinate Mg(2+): Asp-52 and Asp-91. Residues 52-53, Asp-91, and Lys-121 contribute to the 3-methyl-2-oxobutanoate site; that span reads DS. Glu-123 contributes to the Mg(2+) binding site. Glu-190 functions as the Proton acceptor in the catalytic mechanism.

It belongs to the PanB family. As to quaternary structure, homodecamer; pentamer of dimers. Mg(2+) is required as a cofactor.

The protein localises to the cytoplasm. It catalyses the reaction 3-methyl-2-oxobutanoate + (6R)-5,10-methylene-5,6,7,8-tetrahydrofolate + H2O = 2-dehydropantoate + (6S)-5,6,7,8-tetrahydrofolate. The protein operates within cofactor biosynthesis; (R)-pantothenate biosynthesis; (R)-pantoate from 3-methyl-2-oxobutanoate: step 1/2. Catalyzes the reversible reaction in which hydroxymethyl group from 5,10-methylenetetrahydrofolate is transferred onto alpha-ketoisovalerate to form ketopantoate. This chain is 3-methyl-2-oxobutanoate hydroxymethyltransferase, found in Rhodospirillum rubrum (strain ATCC 11170 / ATH 1.1.1 / DSM 467 / LMG 4362 / NCIMB 8255 / S1).